We begin with the raw amino-acid sequence, 289 residues long: Phosphate import ATP-binding protein PstB (289 aa).

Residues 1–37 (MRSIDRPGGQAARPTIGSVAGASNTRTRDARSLPDTP) form a disordered region. An ABC transporter domain is found at 41 to 284 (AAAENFSFYY…PVRRETEDYI (244 aa)). 73 to 80 (GPSGCGKS) serves as a coordination point for ATP.

The protein belongs to the ABC transporter superfamily. Phosphate importer (TC 3.A.1.7) family. In terms of assembly, the complex is composed of two ATP-binding proteins (PstB), two transmembrane proteins (PstC and PstA) and a solute-binding protein (PstS).

The protein localises to the cell inner membrane. It carries out the reaction phosphate(out) + ATP + H2O = ADP + 2 phosphate(in) + H(+). Its function is as follows. Part of the ABC transporter complex PstSACB involved in phosphate import. Responsible for energy coupling to the transport system. The protein is Phosphate import ATP-binding protein PstB of Aromatoleum aromaticum (strain DSM 19018 / LMG 30748 / EbN1) (Azoarcus sp. (strain EbN1)).